A 454-amino-acid polypeptide reads, in one-letter code: Bifunctional protein GlmU (454 aa).

The pyrophosphorylase stretch occupies residues 1 to 225 (MNIVILAAGM…LWETLGVNSK (225 aa)). Residues 6-9 (LAAG), K20, Q71, 76-77 (GT), 98-100 (YGD), G135, E150, N165, and N223 each bind UDP-N-acetyl-alpha-D-glucosamine. Position 100 (D100) interacts with Mg(2+). Residue N223 participates in Mg(2+) binding. Positions 226-246 (VQLAEVERIHQRNLAQRLLET) are linker. Residues 247-454 (GVTLADPARI…WQRPVKKAKQ (208 aa)) are N-acetyltransferase. UDP-N-acetyl-alpha-D-glucosamine-binding residues include R329 and K347. H359 (proton acceptor) is an active-site residue. Positions 362 and 373 each coordinate UDP-N-acetyl-alpha-D-glucosamine. Acetyl-CoA contacts are provided by residues A376, 382–383 (NY), S401, A419, and R436.

In the N-terminal section; belongs to the N-acetylglucosamine-1-phosphate uridyltransferase family. The protein in the C-terminal section; belongs to the transferase hexapeptide repeat family. In terms of assembly, homotrimer. Mg(2+) serves as cofactor.

The protein localises to the cytoplasm. It catalyses the reaction alpha-D-glucosamine 1-phosphate + acetyl-CoA = N-acetyl-alpha-D-glucosamine 1-phosphate + CoA + H(+). The catalysed reaction is N-acetyl-alpha-D-glucosamine 1-phosphate + UTP + H(+) = UDP-N-acetyl-alpha-D-glucosamine + diphosphate. Its pathway is nucleotide-sugar biosynthesis; UDP-N-acetyl-alpha-D-glucosamine biosynthesis; N-acetyl-alpha-D-glucosamine 1-phosphate from alpha-D-glucosamine 6-phosphate (route II): step 2/2. It functions in the pathway nucleotide-sugar biosynthesis; UDP-N-acetyl-alpha-D-glucosamine biosynthesis; UDP-N-acetyl-alpha-D-glucosamine from N-acetyl-alpha-D-glucosamine 1-phosphate: step 1/1. It participates in bacterial outer membrane biogenesis; LPS lipid A biosynthesis. Catalyzes the last two sequential reactions in the de novo biosynthetic pathway for UDP-N-acetylglucosamine (UDP-GlcNAc). The C-terminal domain catalyzes the transfer of acetyl group from acetyl coenzyme A to glucosamine-1-phosphate (GlcN-1-P) to produce N-acetylglucosamine-1-phosphate (GlcNAc-1-P), which is converted into UDP-GlcNAc by the transfer of uridine 5-monophosphate (from uridine 5-triphosphate), a reaction catalyzed by the N-terminal domain. The protein is Bifunctional protein GlmU of Cupriavidus pinatubonensis (strain JMP 134 / LMG 1197) (Cupriavidus necator (strain JMP 134)).